The sequence spans 248 residues: Homeobox protein BarH-like 1 (248 aa).

Residues 135 to 194 constitute a DNA-binding region (homeobox); sequence GRRSRTVFTELQLMGLEKRFEKQKYLSTPDRIDLAESLGLSQLQVKTWYQNRRMKWKKIV. Residues 197-248 are disordered; that stretch reads GGGLESPTKPKGRPKKNSIPTSEQLSEQERTREADRLSDGGASSLSDANQEE. Residues 223-234 show a composition bias toward basic and acidic residues; the sequence is EQERTREADRLS. The span at 237 to 248 shows a compositional bias: polar residues; it reads GASSLSDANQEE.

It belongs to the BAR homeobox family.

The protein resides in the nucleus. Transcription factor, is involved in craniofacial development, and in stomach organogenesis. This Danio rerio (Zebrafish) protein is Homeobox protein BarH-like 1 (barx1).